The following is a 142-amino-acid chain: Putative FK506-binding protein 9-like protein (142 aa).

A PPIase FKBP-type domain is found at 1-49 (MDMGLREMCVGEKRTVIIPPHLGYGEAGVDGEVPGSAVLVFDIELLELV). EF-hand domains follow at residues 60 to 95 (WNGE…QVAS) and 105 to 140 (DAEL…AKQD). Residues Asp-118, Asn-120, Asp-122, Lys-124, and Glu-129 each contribute to the Ca(2+) site.

The protein is Putative FK506-binding protein 9-like protein (FKBP9P1) of Homo sapiens (Human).